The following is a 197-amino-acid chain: Glycerol-3-phosphate acyltransferase (197 aa).

Transmembrane regions (helical) follow at residues 1 to 21, 50 to 70, 82 to 102, 112 to 132, and 159 to 179; these read MDFI…GLLI, LGFA…VLAA, IVCL…YLGF, LGVF…VFAA, and GASQ…WIKH.

Belongs to the PlsY family. As to quaternary structure, probably interacts with PlsX.

The protein localises to the cell inner membrane. It carries out the reaction an acyl phosphate + sn-glycerol 3-phosphate = a 1-acyl-sn-glycero-3-phosphate + phosphate. It participates in lipid metabolism; phospholipid metabolism. In terms of biological role, catalyzes the transfer of an acyl group from acyl-phosphate (acyl-PO(4)) to glycerol-3-phosphate (G3P) to form lysophosphatidic acid (LPA). This enzyme utilizes acyl-phosphate as fatty acyl donor, but not acyl-CoA or acyl-ACP. This is Glycerol-3-phosphate acyltransferase from Desulfotalea psychrophila (strain LSv54 / DSM 12343).